The chain runs to 644 residues: Kininogen-1 (644 aa).

Positions 1–18 are cleaved as a signal peptide; that stretch reads MKLITILFLCSRLLLSLT. Glutamine 19 is subject to Pyrrolidone carboxylic acid; in mature form. Residues 28-132 form the Cystatin kininogen-type 1 domain; the sequence is CNDKDLFKAV…TQTCQITPAE (105 aa). 9 cysteine pairs are disulfide-bonded: cysteine 28–cysteine 614, cysteine 83–cysteine 94, cysteine 107–cysteine 126, cysteine 142–cysteine 145, cysteine 206–cysteine 218, cysteine 229–cysteine 248, cysteine 264–cysteine 267, cysteine 328–cysteine 340, and cysteine 351–cysteine 370. The N-linked (GlcNAc...) (complex) asparagine glycan is linked to asparagine 48. The interval 120–153 is O-glycosylated at one site only; the sequence is SVATQTCQITPAEGPVVTAQYDCLGCVHPISTQS. The Cystatin kininogen-type 2 domain occupies 151 to 254; it reads TQSPDLEPIL…SQNCDIYPGK (104 aa). N-linked (GlcNAc...) asparagine glycosylation occurs at asparagine 169. Residue asparagine 205 is glycosylated (N-linked (GlcNAc...) (complex) asparagine). Positions 273–376 constitute a Cystatin kininogen-type 3 domain; the sequence is TNSPELEETL…TVNCQPLGMI (104 aa). Asparagine 294 carries N-linked (GlcNAc...) (complex) asparagine glycosylation. A Phosphoserine; by FAM20C modification is found at serine 332. The residue at position 383 (proline 383) is a 4-hydroxyproline; partial. The segment at 387–555 is disordered; sequence PFRSSRIGEI…TPIPSLAKPG (169 aa). An O-linked (GalNAc...) threonine glycan is attached at threonine 401. Over residues 418-434 the composition is skewed to basic and acidic residues; it reads DSGKEQGHTRRHDWGHE. 3 repeats span residues 420–449, 450–479, and 480–510; these read GKEQ…KHER, DQGH…KFKL, and DDDL…KNKG. Residues 435–446 are compositionally biased toward basic residues; the sequence is KQRKHNLGHGHK. A compositionally biased stretch (basic and acidic residues) spans 477 to 493; the sequence is FKLDDDLEHQGGHVLDH. Over residues 494–518 the composition is skewed to basic residues; that stretch reads GHKHKHGHGHGKHKNKGKKNGKHNG. Residues 524–539 are compositionally biased toward polar residues; the sequence is LASSSEDSTTPSAQTQ. Residues threonine 533, threonine 542, threonine 546, threonine 557, and threonine 571 are each glycosylated (O-linked (GalNAc...) threonine). A glycan (O-linked (GalNAc...) serine) is linked at serine 577. Threonine 628 carries O-linked (GalNAc...) threonine glycosylation.

Interacts (high molecular weight kininogen) (via amino acids 402-532) with triafestin-1 and triafestin-2, anticoagulant proteins from Triatoma infestans. Interacts (high molecular weight kininogen) (via amino acids 402-532) with short form salivary protein D7R1, an anticoagulant protein from Anopheles stephensi. Interacts (high molecular weight kininogen) (via amino acids 421-466 and 459-513) with haemaphysalin, an anticoagulant protein from Haemaphysalis longicornis. In terms of processing, bradykinin is inactivated by ACE, which removes the dipeptide Arg-Phe from its C-terminus. Bradykinin is released from kininogen by plasma kallikrein. Post-translationally, hydroxylation of Pro-383 occurs prior to the release of bradykinin. In terms of processing, phosphorylated by FAM20C in the extracellular medium. N- and O-glycosylated. O-glycosylated with core 1 or possibly core 8 glycans. Post-translationally, (Microbial infection) Bradykinin is generated upon proteolytic cleavage by S.pyogenes SpeB to produce hypotension during septic shock. As to expression, secreted in plasma. T-kinin is detected in malignant ovarian, colon and breast carcinomas, but not in benign tumors.

The protein resides in the secreted. The protein localises to the extracellular space. Kininogens are inhibitors of thiol proteases. HMW-kininogen plays an important role in blood coagulation by helping to position optimally prekallikrein and factor XI next to factor XII; HMW-kininogen inhibits the thrombin- and plasmin-induced aggregation of thrombocytes. LMW-kininogen inhibits the aggregation of thrombocytes. LMW-kininogen is in contrast to HMW-kininogen not involved in blood clotting. Functionally, the active peptide bradykinin is a potent vasodilatator that is released from HMW-kininogen shows a variety of physiological effects: (A) influence in smooth muscle contraction, (B) induction of hypotension, (C) natriuresis and diuresis, (D) decrease in blood glucose level, (E) it is a mediator of inflammation and causes (E1) increase in vascular permeability, (E2) stimulation of nociceptors (4E3) release of other mediators of inflammation (e.g. prostaglandins), (F) it has a cardioprotective effect (directly via bradykinin action, indirectly via endothelium-derived relaxing factor action). This Homo sapiens (Human) protein is Kininogen-1 (KNG1).